We begin with the raw amino-acid sequence, 272 residues long: Putative phosphoenolpyruvate synthase regulatory protein (272 aa).

152–159 provides a ligand contact to ADP; sequence GVSRCGKT.

Belongs to the pyruvate, phosphate/water dikinase regulatory protein family. PSRP subfamily.

The catalysed reaction is [pyruvate, water dikinase] + ADP = [pyruvate, water dikinase]-phosphate + AMP + H(+). It catalyses the reaction [pyruvate, water dikinase]-phosphate + phosphate + H(+) = [pyruvate, water dikinase] + diphosphate. Bifunctional serine/threonine kinase and phosphorylase involved in the regulation of the phosphoenolpyruvate synthase (PEPS) by catalyzing its phosphorylation/dephosphorylation. This chain is Putative phosphoenolpyruvate synthase regulatory protein, found in Pseudomonas putida (strain GB-1).